The following is a 303-amino-acid chain: Hemolysin C (303 aa).

2 CBS domains span residues M81 to L143 and L146 to E203.

This sequence belongs to the UPF0053 family. Hemolysin C subfamily.

The chain is Hemolysin C (tlyC) from Rickettsia prowazekii (strain Madrid E).